The chain runs to 218 residues: Dual specificity protein phosphatase TpbA (218 aa).

Residues M1–A28 form the signal peptide. Residues D44–L188 form the Tyrosine-protein phosphatase domain. Catalysis depends on D105, which acts as the Proton donor/acceptor. The active-site Phosphocysteine intermediate is the C132.

This sequence belongs to the protein-tyrosine phosphatase family.

It localises to the periplasm. It catalyses the reaction O-phospho-L-tyrosyl-[protein] + H2O = L-tyrosyl-[protein] + phosphate. The catalysed reaction is O-phospho-L-threonyl-[protein] + H2O = L-threonyl-[protein] + phosphate. The enzyme catalyses O-phospho-L-seryl-[protein] + H2O = L-seryl-[protein] + phosphate. Its function is as follows. Phosphatase that regulates diverse phenotypes in P.aeruginosa via regulation of the concentration of cellular c-di-GMP. Acts by dephosphorylating the membrane-anchored diguanylate cyclase TpbB at tyrosine and serine/threonine sites, leading to inactivation of TpbB and reduced c-di-GMP production. In vitro shows phosphatase activity toward p-nitrophenyl phosphate (pNPP) and tyrosine phosphopeptides. Can efficiently dephosphorylate two phosphorylated peptides derived from the periplasmic domain of TpbB, with a strong preference for Tyr-48 over Tyr-62. The chain is Dual specificity protein phosphatase TpbA from Pseudomonas aeruginosa (strain ATCC 15692 / DSM 22644 / CIP 104116 / JCM 14847 / LMG 12228 / 1C / PRS 101 / PAO1).